The following is a 358-amino-acid chain: 3-dehydroquinate synthase (358 aa).

NAD(+) is bound by residues 70–75 (DGEQYK), 104–108 (GVIGD), 128–129 (TT), K141, K150, and 168–171 (CLST). Residues E183, H246, and H263 each contribute to the Zn(2+) site.

The protein belongs to the sugar phosphate cyclases superfamily. Dehydroquinate synthase family. The cofactor is Co(2+). Zn(2+) is required as a cofactor. Requires NAD(+) as cofactor.

Its subcellular location is the cytoplasm. It carries out the reaction 7-phospho-2-dehydro-3-deoxy-D-arabino-heptonate = 3-dehydroquinate + phosphate. Its pathway is metabolic intermediate biosynthesis; chorismate biosynthesis; chorismate from D-erythrose 4-phosphate and phosphoenolpyruvate: step 2/7. Functionally, catalyzes the conversion of 3-deoxy-D-arabino-heptulosonate 7-phosphate (DAHP) to dehydroquinate (DHQ). The protein is 3-dehydroquinate synthase of Shewanella woodyi (strain ATCC 51908 / MS32).